We begin with the raw amino-acid sequence, 92 residues long: Small ribosomal subunit protein bS18 (92 aa).

Belongs to the bacterial ribosomal protein bS18 family. In terms of assembly, part of the 30S ribosomal subunit. Forms a tight heterodimer with protein bS6.

Its function is as follows. Binds as a heterodimer with protein bS6 to the central domain of the 16S rRNA, where it helps stabilize the platform of the 30S subunit. The chain is Small ribosomal subunit protein bS18 from Ralstonia nicotianae (strain ATCC BAA-1114 / GMI1000) (Ralstonia solanacearum).